We begin with the raw amino-acid sequence, 359 residues long: snRNA-activating protein complex subunit 2 (359 aa).

Over residues 1-11 (MKPPQRRRRVP) the composition is skewed to basic residues. Disordered stretches follow at residues 1–22 (MKPP…TGPT), 157–221 (NQDG…GSST), and 291–327 (TALP…SEPI).

In terms of assembly, part of the SNAPc complex composed of 5 subunits: SNAPC1, SNAPC2, SNAPC3, SNAPC4 and SNAPC5. SNAPC2 interacts with TBP and SNAPC4.

It is found in the nucleus. Part of the SNAPc complex required for the transcription of both RNA polymerase II and III small-nuclear RNA genes. Binds to the proximal sequence element (PSE), a non-TATA-box basal promoter element common to these 2 types of genes. Recruits TBP and BRF2 to the U6 snRNA TATA box. This is snRNA-activating protein complex subunit 2 (Snapc2) from Mus musculus (Mouse).